The primary structure comprises 163 residues: MSSLTHFDAQGQAHMVDVAAKPATHRVAVATGRIEMQPATLALIESGTAKKGDVLGIARIAGIQAAKKTSDLIPLCHPLALTRVALAFALAEKGNAPQVVCTATVETVGPTGVEMEALTAVQVALLTIYDMCKAVDRGMRITDVHVLEKHGGKSGSYLADPQG.

Substrate-binding positions include 75 to 77 and 115 to 116; these read LCH and ME. Residue Asp-130 is part of the active site.

This sequence belongs to the MoaC family. In terms of assembly, homohexamer; trimer of dimers.

The catalysed reaction is (8S)-3',8-cyclo-7,8-dihydroguanosine 5'-triphosphate = cyclic pyranopterin phosphate + diphosphate. It participates in cofactor biosynthesis; molybdopterin biosynthesis. In terms of biological role, catalyzes the conversion of (8S)-3',8-cyclo-7,8-dihydroguanosine 5'-triphosphate to cyclic pyranopterin monophosphate (cPMP). The chain is Cyclic pyranopterin monophosphate synthase from Variovorax paradoxus (strain S110).